A 645-amino-acid polypeptide reads, in one-letter code: Threonine--tRNA ligase (645 aa).

Positions 1–61 (MIKITLPDGS…TSDSTVQLLT (61 aa)) constitute a TGS domain. The interval 242–541 (DHRKLGKELE…LIEHVAGNFP (300 aa)) is catalytic. Cysteine 337, histidine 388, and histidine 518 together coordinate Zn(2+).

This sequence belongs to the class-II aminoacyl-tRNA synthetase family. Homodimer. Zn(2+) is required as a cofactor.

The protein resides in the cytoplasm. It carries out the reaction tRNA(Thr) + L-threonine + ATP = L-threonyl-tRNA(Thr) + AMP + diphosphate + H(+). Catalyzes the attachment of threonine to tRNA(Thr) in a two-step reaction: L-threonine is first activated by ATP to form Thr-AMP and then transferred to the acceptor end of tRNA(Thr). Also edits incorrectly charged L-seryl-tRNA(Thr). This chain is Threonine--tRNA ligase, found in Cytophaga hutchinsonii (strain ATCC 33406 / DSM 1761 / CIP 103989 / NBRC 15051 / NCIMB 9469 / D465).